The chain runs to 441 residues: Ribosomal protein uS12 methylthiotransferase RimO (441 aa).

In terms of domain architecture, MTTase N-terminal spans 7–117; that stretch reads PKISFVSLGC…VLEAVHRARP (111 aa). C16, C52, C81, C148, C152, and C155 together coordinate [4Fe-4S] cluster. In terms of domain architecture, Radical SAM core spans 134 to 371; it reads LTPRHYAYLK…MARQQAISAR (238 aa). One can recognise a TRAM domain in the interval 374-440; the sequence is KRKVGTRQQV…AYDLHGTVAG (67 aa).

Belongs to the methylthiotransferase family. RimO subfamily. [4Fe-4S] cluster is required as a cofactor.

It localises to the cytoplasm. The catalysed reaction is L-aspartate(89)-[ribosomal protein uS12]-hydrogen + (sulfur carrier)-SH + AH2 + 2 S-adenosyl-L-methionine = 3-methylsulfanyl-L-aspartate(89)-[ribosomal protein uS12]-hydrogen + (sulfur carrier)-H + 5'-deoxyadenosine + L-methionine + A + S-adenosyl-L-homocysteine + 2 H(+). Its function is as follows. Catalyzes the methylthiolation of an aspartic acid residue of ribosomal protein uS12. The protein is Ribosomal protein uS12 methylthiotransferase RimO of Rhodopseudomonas palustris (strain ATCC BAA-98 / CGA009).